We begin with the raw amino-acid sequence, 978 residues long: LRR receptor-like serine/threonine-protein kinase ER1 (978 aa).

The N-terminal stretch at 1–24 (MTPAPAAASYRALVALLLVAVAVA) is a signal peptide. Topologically, residues 25-577 (DDGSTLLEIK…GHQQKPLISK (553 aa)) are extracellular. 2 N-linked (GlcNAc...) asparagine glycosylation sites follow: Asn62 and Asn71. LRR repeat units lie at residues 66–87 (AVAALNLSGLNLGGEISPAVGR), 88–112 (LKGIVSIDLKSNGLSGQIPDEIGDC), 114–136 (SLKTLDLSFNSLDGDIPFSVSKL), 137–159 (KHIESLILKNNQLIGVIPSTLSQ), 160–184 (LPNLKILDLAQNKLSGEIPRLIYWN), 186–208 (VLQYLGLRGNNLEGSISPDICQL), 209–232 (TGLWYFDVKNNSLTGPIPETIGNC), 233–257 (TSFQVLDLSYNKLSGSIPFNIGFLQ), 259–278 (ATLSLQGNMFTGPIPSVIGL), 279–302 (MQALAVLDLSYNQLSGPIPSILGN), 304–327 (TYTEKLYMQGNKLTGPIPPELGNM), 328–350 (STLHYLELNDNQLSGFIPPEFGK), 352–375 (TGLFDLNLANNNFEGPIPDNISSC), 377–399 (NLNSFNAYGNRLNGTIPPSLHKL), 400–423 (ESMTYLNLSSNFLSGSIPIELSRI), 424–447 (NNLDTLDLSCNMITGPIPSTIGSL), 449–470 (HLLRLNLSNNGLVGFIPAEIGN), 471–494 (LRSIMEIDMSNNHLGGLIPQELGM), 496–518 (QNLMLLNLKNNNITGDVSSLMNC), and 519–543 (FSLNILNVSYNNLAGVVPTDNNFSR). Residues Asn218 and Asn231 are each glycosylated (N-linked (GlcNAc...) asparagine). Residues Asn302 and Asn326 are each glycosylated (N-linked (GlcNAc...) asparagine). N-linked (GlcNAc...) asparagine glycosylation is found at Asn371, Asn389, and Asn406. A glycan (N-linked (GlcNAc...) asparagine) is linked at Asn454. N-linked (GlcNAc...) asparagine glycans are attached at residues Asn507, Asn525, and Asn540. The helical transmembrane segment at 578 to 598 (AAILGIAVGGLVILLMILVAV) threads the bilayer. The Cytoplasmic segment spans residues 599–978 (CRPHSPPVFK…FGEVISQNTE (380 aa)). One can recognise a Protein kinase domain in the interval 645–916 (LSEKYIIGYG…EVVRVLDCLV (272 aa)). Residues 651–659 (IGYGASSTV) and Lys673 each bind ATP. Asp771 functions as the Proton acceptor in the catalytic mechanism.

Belongs to the protein kinase superfamily. Ser/Thr protein kinase family.

Its subcellular location is the cell membrane. It catalyses the reaction L-seryl-[protein] + ATP = O-phospho-L-seryl-[protein] + ADP + H(+). It carries out the reaction L-threonyl-[protein] + ATP = O-phospho-L-threonyl-[protein] + ADP + H(+). Receptor kinase involved in the regulation of thermotolerance. Functions as a positive regulator of heat tolerance. May be involved in the regulation of cell proliferation and cell growth. The polypeptide is LRR receptor-like serine/threonine-protein kinase ER1 (Oryza sativa subsp. japonica (Rice)).